The sequence spans 42 residues: Conotoxin Au11.6 (42 aa).

Cystine bridges form between cysteine 6/cysteine 20, cysteine 13/cysteine 25, cysteine 19/cysteine 30, and cysteine 24/cysteine 37.

Belongs to the conotoxin I1 superfamily. Expressed by the venom duct.

It is found in the secreted. This is Conotoxin Au11.6 from Conus aulicus (Princely cone).